The following is a 261-amino-acid chain: Ribosomal RNA large subunit methyltransferase E (261 aa).

G81, W83, D104, D120, and D144 together coordinate S-adenosyl-L-methionine. The Proton acceptor role is filled by K184. The disordered stretch occupies residues 233–261 (GNALGHEVEDDGPMPHDPREDATADEDQD). Basic and acidic residues predominate over residues 245–254 (PMPHDPREDA).

This sequence belongs to the class I-like SAM-binding methyltransferase superfamily. RNA methyltransferase RlmE family.

The protein resides in the cytoplasm. The enzyme catalyses uridine(2552) in 23S rRNA + S-adenosyl-L-methionine = 2'-O-methyluridine(2552) in 23S rRNA + S-adenosyl-L-homocysteine + H(+). Specifically methylates the uridine in position 2552 of 23S rRNA at the 2'-O position of the ribose in the fully assembled 50S ribosomal subunit. The chain is Ribosomal RNA large subunit methyltransferase E from Allorhizobium ampelinum (strain ATCC BAA-846 / DSM 112012 / S4) (Agrobacterium vitis (strain S4)).